We begin with the raw amino-acid sequence, 221 residues long: Ribonuclease HII (221 aa).

The RNase H type-2 domain occupies 29-220 (RRVAGVDEVG…LRDLQAGEIG (192 aa)). Residues D35, E36, and D129 each contribute to the a divalent metal cation site. The interval 198-221 (LGPSPQHRRSFAPLRDLQAGEIGG) is disordered.

It belongs to the RNase HII family. The cofactor is Mn(2+). It depends on Mg(2+) as a cofactor.

It is found in the cytoplasm. It catalyses the reaction Endonucleolytic cleavage to 5'-phosphomonoester.. Its function is as follows. Endonuclease that specifically degrades the RNA of RNA-DNA hybrids. The polypeptide is Ribonuclease HII (Synechococcus sp. (strain JA-3-3Ab) (Cyanobacteria bacterium Yellowstone A-Prime)).